A 365-amino-acid polypeptide reads, in one-letter code: MSSSVEQKKGPTRQRKCGFCKSNRDKECGQLLISENQKVAAHHKCMLFSSALVSSHSDNESLGGFSIEDVQKEIKRGTKLMCSLCHCPGATIGCDVKTCHRTYHYHCALHDKAQIREKPSQGIYMVYCRKHKKTAHNSEADLEESFNEHELEPSSPKSKKKSRKGRPRKTNFKGLSEDTRSTSSHGTDEMESSSYRDRSPHRSSPSDTRPKCGFCHVGEEENQARGKLHIFNAKKAAAHYKCMLFSSGTVQLTTTSRAEFGDFDIKTVLQEIKRGKRMKCTLCSQPGATIGCEIKACVKTYHYHCGVQDKAKYIENMSRGIYKLYCKNHSGNDERDEEDEERESKSRGKVEIDQQQLTQQQLNGN.

Serine 2 carries the post-translational modification N-acetylserine. 2 consecutive short sequence motifs (nuclear localization signal) follow at residues arginine 13–lysine 16 and arginine 129–lysine 133. A C2HC pre-PHD-type 1 zinc finger spans residues glutamine 14–leucine 52. Positions glutamine 14 to lysine 132 are extended PHD1 domain (ePHD1). Residues leucine 80–lysine 132 form a PHD-type 1 zinc finger. Phosphoserine is present on residues serine 138, serine 145, and serine 155. A disordered region spans residues glutamate 139–lysine 211. The Nucleolar localization signal signature appears at lysine 157–lysine 169. A compositionally biased stretch (basic residues) spans lysine 157–asparagine 171. Lysine 173 participates in a covalent cross-link: Glycyl lysine isopeptide (Lys-Gly) (interchain with G-Cter in SUMO2). Phosphoserine is present on residues serine 183 and serine 199. The segment at arginine 209–threonine 249 adopts a C2HC pre-PHD-type 2 zinc-finger fold. Residues arginine 209 to serine 330 form an extended PHD2 domain (ePHD2) region. A Glycyl lysine isopeptide (Lys-Gly) (interchain with G-Cter in SUMO2) cross-link involves residue lysine 227. The PHD-type 2 zinc finger occupies methionine 278–serine 330. The disordered stretch occupies residues serine 330–asparagine 365. Residues arginine 342–isoleucine 352 show a composition bias toward basic and acidic residues. A compositionally biased stretch (low complexity) spans glutamine 354–asparagine 365. At threonine 358 the chain carries Phosphothreonine.

As to quaternary structure, interacts with UBTF. Interacts with the NuRD complex component RBBP4 (via the nucleolar localization motif), the interaction mediates transcriptional repression activity.

It localises to the nucleus. Its subcellular location is the nucleolus. The protein localises to the chromosome. The protein resides in the centromere. It is found in the kinetochore. Transcriptional regulator that associates with ribosomal RNA promoters and suppresses ribosomal RNA (rRNA) transcription. The protein is PHD finger protein 6 (PHF6) of Bos taurus (Bovine).